The primary structure comprises 688 residues: MGLKITKGQLRTKDLNQSSSKSSQSSRIGVDTCIFTRMLPRINTAINLTEHLLRRSFHSLTNLQKTQVKERLHELERHGFILNKTSKQLERINSKKRRQLKKLQKTAYPKDQAFHILRKFHKINNEALADTKLGPTSQSDLKFLSLTKDKRLFYTILGVNGEQLRDSKLIANDVQKFLKRGQLEKAVFLARLAKKKGVVGMNLIMKYYIEVVQSQQSAVDIFNWRKKWGVPIDQHSITILFNGLSKQENLVSKKYGELVLKTIDSLCDKNELTEIEYNTALAALINCTDETLVFKLLNKKCPGLKKDSITYTLMIRSCTRIADEKRFMVVLNDLMNKIPDYCVDSKLLFEYCEVICSQKSPKIEKQGMGLWALCEYFQFDKTIFKKYLTQSDFPTLVPLSHWNINKPFPLNKHVVGLFMNYCLKNKEYDLAMEIFKTLEAQNNQMLDQSIYHKYMETVITTRPITCGDECLDIYERVASSAQISITRRTLILVYNAFQRQSLKAVINKDASNAEATLHKIRGFIDSVEATYSSKLNGKVYRFNSWKFLFPIVKNLNMNDKVSTVELKSILDEYLKSLLNGEFGKEFKASIEDKRFVTLEGIRLVKVLTERIKLPSLDSEEIASLKGTERKKFLARRHLLRLKQILLEDLADIEGNSRRKGDSENTSTSEERIMEDLAELILETSYDKF.

A disordered region spans residues 1-24; that stretch reads MGLKITKGQLRTKDLNQSSSKSSQ. The transit peptide at 1-46 directs the protein to the mitochondrion; sequence MGLKITKGQLRTKDLNQSSSKSSQSSRIGVDTCIFTRMLPRINTAI.

As to quaternary structure, associates with the mitochondrial ribosome.

It localises to the mitochondrion. Component of MIOREX complexes, large expressome-like assemblies of ribosomes with factors involved in all the steps of post-transcriptional gene expression. The polypeptide is MIOREX complex component 1 (Saccharomyces cerevisiae (strain ATCC 204508 / S288c) (Baker's yeast)).